The chain runs to 101 residues: NAD(P)H-quinone oxidoreductase subunit 4L, chloroplastic (101 aa).

Helical transmembrane passes span 2 to 22 (MLEYVLGLSAYLFSIGIYGLI), 32 to 52 (MCLELILNAVNLNFVTFSDFF), and 61 to 81 (ILSIFVISIAAAEAAIGPAIV).

This sequence belongs to the complex I subunit 4L family. In terms of assembly, NDH is composed of at least 16 different subunits, 5 of which are encoded in the nucleus.

It localises to the plastid. The protein localises to the chloroplast thylakoid membrane. The enzyme catalyses a plastoquinone + NADH + (n+1) H(+)(in) = a plastoquinol + NAD(+) + n H(+)(out). It carries out the reaction a plastoquinone + NADPH + (n+1) H(+)(in) = a plastoquinol + NADP(+) + n H(+)(out). In terms of biological role, NDH shuttles electrons from NAD(P)H:plastoquinone, via FMN and iron-sulfur (Fe-S) centers, to quinones in the photosynthetic chain and possibly in a chloroplast respiratory chain. The immediate electron acceptor for the enzyme in this species is believed to be plastoquinone. Couples the redox reaction to proton translocation, and thus conserves the redox energy in a proton gradient. The chain is NAD(P)H-quinone oxidoreductase subunit 4L, chloroplastic from Populus alba (White poplar).